The following is a 211-amino-acid chain: Cytidylate kinase (211 aa).

Position 9–17 (9–17) interacts with ATP; that stretch reads GPAAAGKGT.

It belongs to the cytidylate kinase family. Type 1 subfamily.

Its subcellular location is the cytoplasm. The enzyme catalyses CMP + ATP = CDP + ADP. The catalysed reaction is dCMP + ATP = dCDP + ADP. The sequence is that of Cytidylate kinase from Paramagnetospirillum magneticum (strain ATCC 700264 / AMB-1) (Magnetospirillum magneticum).